A 409-amino-acid chain; its full sequence is 8-amino-7-oxononanoate synthase (409 aa).

Arg20 is a binding site for substrate. Residue 116–117 (GY) participates in pyridoxal 5'-phosphate binding. His141 serves as a coordination point for substrate. Residues Ser187, His215, and Thr243 each contribute to the pyridoxal 5'-phosphate site. Lys246 is subject to N6-(pyridoxal phosphate)lysine. Residue Thr369 coordinates substrate.

It belongs to the class-II pyridoxal-phosphate-dependent aminotransferase family. BioF subfamily. In terms of assembly, homodimer. Requires pyridoxal 5'-phosphate as cofactor.

It carries out the reaction 6-carboxyhexanoyl-[ACP] + L-alanine + H(+) = (8S)-8-amino-7-oxononanoate + holo-[ACP] + CO2. It participates in cofactor biosynthesis; biotin biosynthesis. Functionally, catalyzes the decarboxylative condensation of pimeloyl-[acyl-carrier protein] and L-alanine to produce 8-amino-7-oxononanoate (AON), [acyl-carrier protein], and carbon dioxide. This Polaromonas naphthalenivorans (strain CJ2) protein is 8-amino-7-oxononanoate synthase.